Consider the following 338-residue polypeptide: Aspartate-semialdehyde dehydrogenase (338 aa).

Residues 13–16 (TGNV) and 41–42 (NS) contribute to the NADP(+) site. Arg-101 contacts phosphate. Residue Cys-132 is the Acyl-thioester intermediate of the active site. Position 159 (Gln-159) interacts with substrate. Residues 162 to 163 (SG) and Pro-187 contribute to the NADP(+) site. Lys-216 serves as a coordination point for phosphate. Arg-237 serves as a coordination point for substrate. Catalysis depends on His-244, which acts as the Proton acceptor. Asn-317 is a binding site for NADP(+).

Belongs to the aspartate-semialdehyde dehydrogenase family. Homodimer.

It carries out the reaction L-aspartate 4-semialdehyde + phosphate + NADP(+) = 4-phospho-L-aspartate + NADPH + H(+). It participates in amino-acid biosynthesis; L-lysine biosynthesis via DAP pathway; (S)-tetrahydrodipicolinate from L-aspartate: step 2/4. The protein operates within amino-acid biosynthesis; L-methionine biosynthesis via de novo pathway; L-homoserine from L-aspartate: step 2/3. It functions in the pathway amino-acid biosynthesis; L-threonine biosynthesis; L-threonine from L-aspartate: step 2/5. Its function is as follows. Catalyzes the NADPH-dependent formation of L-aspartate-semialdehyde (L-ASA) by the reductive dephosphorylation of L-aspartyl-4-phosphate. The sequence is that of Aspartate-semialdehyde dehydrogenase from Rickettsia typhi (strain ATCC VR-144 / Wilmington).